Here is a 198-residue protein sequence, read N- to C-terminus: FMN-dependent NADH:quinone oxidoreductase (198 aa).

Residue 96–99 (MYNF) coordinates FMN.

The protein belongs to the azoreductase type 1 family. Homodimer. FMN is required as a cofactor.

It carries out the reaction 2 a quinone + NADH + H(+) = 2 a 1,4-benzosemiquinone + NAD(+). The enzyme catalyses N,N-dimethyl-1,4-phenylenediamine + anthranilate + 2 NAD(+) = 2-(4-dimethylaminophenyl)diazenylbenzoate + 2 NADH + 2 H(+). In terms of biological role, quinone reductase that provides resistance to thiol-specific stress caused by electrophilic quinones. Also exhibits azoreductase activity. Catalyzes the reductive cleavage of the azo bond in aromatic azo compounds to the corresponding amines. This Burkholderia mallei (strain ATCC 23344) protein is FMN-dependent NADH:quinone oxidoreductase.